A 77-amino-acid chain; its full sequence is Exodeoxyribonuclease 7 small subunit (77 aa).

The protein belongs to the XseB family. Heterooligomer composed of large and small subunits.

It localises to the cytoplasm. It carries out the reaction Exonucleolytic cleavage in either 5'- to 3'- or 3'- to 5'-direction to yield nucleoside 5'-phosphates.. In terms of biological role, bidirectionally degrades single-stranded DNA into large acid-insoluble oligonucleotides, which are then degraded further into small acid-soluble oligonucleotides. This is Exodeoxyribonuclease 7 small subunit from Chromobacterium violaceum (strain ATCC 12472 / DSM 30191 / JCM 1249 / CCUG 213 / NBRC 12614 / NCIMB 9131 / NCTC 9757 / MK).